Here is a 175-residue protein sequence, read N- to C-terminus: uncharacterized protein (175 aa).

Disordered regions lie at residues 1-32 and 156-175; these read MSHKDFNGLQAPQLLSSSSPVAKKQSSHKLRH and KQKQAKRAANTRQRTYKYRQ. A compositionally biased stretch (low complexity) spans 14–24; that stretch reads LLSSSSPVAKK.

This is an uncharacterized protein from Mycoplasma pneumoniae (strain ATCC 29342 / M129 / Subtype 1) (Mycoplasmoides pneumoniae).